A 280-amino-acid chain; its full sequence is Urease accessory protein UreD 1 (280 aa).

It belongs to the UreD family. UreD, UreF and UreG form a complex that acts as a GTP-hydrolysis-dependent molecular chaperone, activating the urease apoprotein by helping to assemble the nickel containing metallocenter of UreC. The UreE protein probably delivers the nickel.

The protein localises to the cytoplasm. Functionally, required for maturation of urease via the functional incorporation of the urease nickel metallocenter. The polypeptide is Urease accessory protein UreD 1 (Bradyrhizobium sp. (strain BTAi1 / ATCC BAA-1182)).